A 461-amino-acid polypeptide reads, in one-letter code: Serine/threonine-protein kinase 4 homolog A (461 aa).

A Protein kinase domain is found at 20 to 273 (FTIVEKLGEG…AEELLKHPFI (254 aa)). ATP is bound by residues 26–34 (LGEGSYGSV) and Lys-49. Asp-139 acts as the Proton acceptor in catalysis. Thr-173 carries the post-translational modification Phosphothreonine; by autocatalysis. Disordered regions lie at residues 303-349 (GIEQ…EEYD) and 369-388 (NDDE…SNKK). A compositionally biased stretch (acidic residues) spans 307 to 322 (RDEEEEDEDEDSEDSD). The SARAH domain maps to 411-458 (SDKYSSYSLEELKKMLAELEIEREKEVQKTLEKFSINRQALLAVIDEK).

This sequence belongs to the protein kinase superfamily. STE Ser/Thr protein kinase family. STE20 subfamily. It depends on Mn(2+) as a cofactor. In terms of processing, undergoes autophosphorylation in the catalytic domain.

It is found in the cytoplasm. The protein resides in the cytosol. The enzyme catalyses L-seryl-[protein] + ATP = O-phospho-L-seryl-[protein] + ADP + H(+). It carries out the reaction L-threonyl-[protein] + ATP = O-phospho-L-threonyl-[protein] + ADP + H(+). Regulates both cAMP signaling during early development and the stress response. Functions as an activator of adenylylcyclase. The polypeptide is Serine/threonine-protein kinase 4 homolog A (krsA) (Dictyostelium discoideum (Social amoeba)).